The following is a 345-amino-acid chain: RING finger protein 228 (345 aa).

Residues 1 to 21 are compositionally biased toward low complexity; it reads MAAPASDSGGSQQSPSSSPGS. The disordered stretch occupies residues 1-43; that stretch reads MAAPASDSGGSQQSPSSSPGSREGAGVAAKGAPDCGDAGARDA. The RING-type zinc finger occupies 58–125; it reads CKICYNYFDA…PGAIACPVCR (68 aa). The tract at residues 159-213 is disordered; it reads LPQDRLPPLPARLPAPAAAPPPTPAPPPPPSPAPPQPPPPPPAEDAAPGPRARPG. Residues 163-201 are compositionally biased toward pro residues; that stretch reads RLPPLPARLPAPAAAPPPTPAPPPPPSPAPPQPPPPPPA. Residues 202-213 are compositionally biased toward low complexity; the sequence is EDAAPGPRARPG. 2 helical membrane passes run 236–256 and 290–310; these read VCVVFSFLSMVVLLFTGLIFV and LSVASILALFSVVVTWVICWL. The interval 319 to 345 is disordered; it reads AGSTGGSGGGGGPRARAAAGGARRSDT. Residues 321-331 are compositionally biased toward gly residues; sequence STGGSGGGGGP. Low complexity predominate over residues 332-345; sequence RARAAAGGARRSDT.

It is found in the membrane. This is RING finger protein 228 from Homo sapiens (Human).